We begin with the raw amino-acid sequence, 496 residues long: Lysine--tRNA ligase (496 aa).

The Mg(2+) site is built by glutamate 408 and glutamate 415.

Belongs to the class-II aminoacyl-tRNA synthetase family. In terms of assembly, homodimer. The cofactor is Mg(2+).

It localises to the cytoplasm. The catalysed reaction is tRNA(Lys) + L-lysine + ATP = L-lysyl-tRNA(Lys) + AMP + diphosphate. The sequence is that of Lysine--tRNA ligase from Legionella pneumophila (strain Corby).